The sequence spans 433 residues: Staphylopine synthase (433 aa).

NADP(+) contacts are provided by residues 9–12 (TGPV), R33, 37–40 (SEKS), and D99. Residue H216 is the Proton donor/acceptor of the active site.

The protein belongs to the staphylopine dehydrogenase family. As to quaternary structure, homodimer.

It catalyses the reaction staphylopine + NADP(+) + H2O = (2S)-2-amino-4-{[(1R)-1-carboxy-2-(1H-imidazol-4-yl)ethyl]amino}butanoate + pyruvate + NADPH + H(+). Functionally, catalyzes the NADPH-dependent reductive condensation of pyruvate to the intermediate formed by the adjacently encoded enzyme CntL, namely (2S)-2-amino-4-{[(1R)-1-carboxy-2-(1H-imidazol-4-yl)ethyl]amino}butanoate, leading to the production of staphylopine. This is the last step in the biosynthesis of the metallophore staphylopine, which is involved in the acquisition of nickel, cobalt, zinc, copper, and iron, and thus enables bacterial growth inside the host, where metal access is limited. Therefore, this enzyme probably contributes to staphylococcal virulence. Can use neither NADH nor alpha-ketoglutarate in place of NADPH and pyruvate, respectively. This Staphylococcus aureus (strain Mu50 / ATCC 700699) protein is Staphylopine synthase.